The sequence spans 232 residues: Small ribosomal subunit protein uS2 (232 aa).

Belongs to the universal ribosomal protein uS2 family.

The protein is Small ribosomal subunit protein uS2 of Baumannia cicadellinicola subsp. Homalodisca coagulata.